The following is a 360-amino-acid chain: Plastid lipid-associated protein 3, chloroplastic (360 aa).

Residues M1–L37 show a composition bias toward polar residues. The N-terminal 52 residues, M1 to R52, are a transit peptide targeting the chloroplast. The disordered stretch occupies residues M1–G130. A compositionally biased stretch (basic residues) spans T38–K50. Over residues S53 to S68 the composition is skewed to low complexity. Residues T117–A127 show a composition bias toward acidic residues.

This sequence belongs to the PAP/fibrillin family. In terms of tissue distribution, ubiquitous expression among various organs, but only at a very low level.

The protein localises to the plastid. It is found in the chloroplast. The sequence is that of Plastid lipid-associated protein 3, chloroplastic (PAP3) from Brassica campestris (Field mustard).